Consider the following 51-residue polypeptide: MSRNKPVAKKFRLAKALKANSPIPIWIVLKTRGRVRYNPFRRNWRRNDLKV.

This sequence belongs to the eukaryotic ribosomal protein eL39 family.

This Saccharolobus islandicus (strain Y.N.15.51 / Yellowstone #2) (Sulfolobus islandicus) protein is Large ribosomal subunit protein eL39.